A 273-amino-acid chain; its full sequence is Imidazole glycerol phosphate synthase subunit HisF (273 aa).

Catalysis depends on residues aspartate 11 and aspartate 134.

It belongs to the HisA/HisF family. In terms of assembly, heterodimer of HisH and HisF.

It localises to the cytoplasm. The enzyme catalyses 5-[(5-phospho-1-deoxy-D-ribulos-1-ylimino)methylamino]-1-(5-phospho-beta-D-ribosyl)imidazole-4-carboxamide + L-glutamine = D-erythro-1-(imidazol-4-yl)glycerol 3-phosphate + 5-amino-1-(5-phospho-beta-D-ribosyl)imidazole-4-carboxamide + L-glutamate + H(+). The protein operates within amino-acid biosynthesis; L-histidine biosynthesis; L-histidine from 5-phospho-alpha-D-ribose 1-diphosphate: step 5/9. Functionally, IGPS catalyzes the conversion of PRFAR and glutamine to IGP, AICAR and glutamate. The HisF subunit catalyzes the cyclization activity that produces IGP and AICAR from PRFAR using the ammonia provided by the HisH subunit. The polypeptide is Imidazole glycerol phosphate synthase subunit HisF (Methanocella arvoryzae (strain DSM 22066 / NBRC 105507 / MRE50)).